The sequence spans 845 residues: Protein SEY1 (845 aa).

A coiled-coil region spans residues 1 to 29; that stretch reads MELNVDSAKQLLAEHEQELQSAHDAHSIL. Over 1–749 the chain is Cytoplasmic; it reads MELNVDSAKQ…KRATVSSIAQ (749 aa). The 223-residue stretch at 112–334 folds into the GB1/RHD3-type G domain; that stretch reads GFGYDLCAVL…DPNFVFKTEY (223 aa). Residue 122–129 coordinates GTP; that stretch reads GSQSTGKS. A helical transmembrane segment spans residues 750–770; the sequence is VPLWMYGVMLVLGWNELMAIL. The Lumenal portion of the chain corresponds to 771–773; that stretch reads SSP. The helical transmembrane segment at 774–794 threads the bilayer; that stretch reads VYFAFLLVLIASAYIVWRLNL. Residues 795–845 lie on the Cytoplasmic side of the membrane; that stretch reads SGPLISVLRAVANEVHRLADAQLRTHFSQPLREPRPPAESRPAEQIELEPN. The tract at residues 823-845 is disordered; it reads QPLREPRPPAESRPAEQIELEPN. The span at 826 to 838 shows a compositional bias: basic and acidic residues; it reads REPRPPAESRPAE.

The protein belongs to the TRAFAC class dynamin-like GTPase superfamily. GB1/RHD3 GTPase family. RHD3 subfamily.

The protein localises to the endoplasmic reticulum membrane. In terms of biological role, cooperates with the reticulon proteins and tubule-shaping DP1 family proteins to generate and maintain the structure of the tubular endoplasmic reticulum network. Has GTPase activity, which is required for its function in ER organization. The polypeptide is Protein SEY1 (Mycosarcoma maydis (Corn smut fungus)).